Consider the following 331-residue polypeptide: Ketol-acid reductoisomerase (NADP(+)) (331 aa).

One can recognise a KARI N-terminal Rossmann domain in the interval 1-182 (MATLYYDTDA…GGTRAGILET (182 aa)). Residues 25 to 28 (YGSQ), Ser51, Ser53, and 83 to 86 (DEFQ) each bind NADP(+). His108 is an active-site residue. Residue Gly134 participates in NADP(+) binding. The 146-residue stretch at 183-328 (NFKEETETDL…KGLRAMFSWL (146 aa)) folds into the KARI C-terminal knotted domain. Residues Asp191, Glu195, Glu227, and Glu231 each contribute to the Mg(2+) site. Substrate is bound at residue Ser252.

It belongs to the ketol-acid reductoisomerase family. It depends on Mg(2+) as a cofactor.

It carries out the reaction (2R)-2,3-dihydroxy-3-methylbutanoate + NADP(+) = (2S)-2-acetolactate + NADPH + H(+). It catalyses the reaction (2R,3R)-2,3-dihydroxy-3-methylpentanoate + NADP(+) = (S)-2-ethyl-2-hydroxy-3-oxobutanoate + NADPH + H(+). It functions in the pathway amino-acid biosynthesis; L-isoleucine biosynthesis; L-isoleucine from 2-oxobutanoate: step 2/4. Its pathway is amino-acid biosynthesis; L-valine biosynthesis; L-valine from pyruvate: step 2/4. Involved in the biosynthesis of branched-chain amino acids (BCAA). Catalyzes an alkyl-migration followed by a ketol-acid reduction of (S)-2-acetolactate (S2AL) to yield (R)-2,3-dihydroxy-isovalerate. In the isomerase reaction, S2AL is rearranged via a Mg-dependent methyl migration to produce 3-hydroxy-3-methyl-2-ketobutyrate (HMKB). In the reductase reaction, this 2-ketoacid undergoes a metal-dependent reduction by NADPH to yield (R)-2,3-dihydroxy-isovalerate. The protein is Ketol-acid reductoisomerase (NADP(+)) of Synechococcus sp. (strain RCC307).